A 304-amino-acid polypeptide reads, in one-letter code: Virulence protein VirA (304 aa).

Its function is as follows. Could be involved in the biosynthesis of a major surface antigen important for virulence. The protein is Virulence protein VirA (virA) of Vibrio anguillarum (strain ATCC 68554 / 775) (Listonella anguillarum).